We begin with the raw amino-acid sequence, 721 residues long: Quinolinate synthase, chloroplastic (721 aa).

The N-terminal 67 residues, 1–67 (MDAANLVMKS…KIPSNNSTFT (67 aa)), are a transit peptide targeting the chloroplast. The active-site Cysteine persulfide intermediate is the cysteine 133. 2 residues coordinate iminosuccinate: histidine 283 and serine 309. Cysteine 363 serves as a coordination point for [4Fe-4S] cluster. Iminosuccinate is bound by residues 392 to 394 (YIN) and serine 414. [4Fe-4S] cluster is bound at residue cysteine 487. Iminosuccinate-binding positions include 513–515 (HFE) and threonine 538. Cysteine 643 is a binding site for [4Fe-4S] cluster.

The protein belongs to the quinolinate synthase family. Type 1 subfamily. As to quaternary structure, homodimer. The cofactor is [4Fe-4S] cluster.

Its subcellular location is the plastid. It localises to the chloroplast. The catalysed reaction is iminosuccinate + dihydroxyacetone phosphate = quinolinate + phosphate + 2 H2O + H(+). It functions in the pathway alkaloid biosynthesis; nicotine biosynthesis. It participates in cofactor biosynthesis; NAD(+) biosynthesis; quinolinate from iminoaspartate: step 1/1. Functionally, involved in the biosynthesis of pyridine alkaloid natural products, leading mainly to the production of anabasine, anatabine, nicotine and nornicotine, effective deterrents against herbivores with antiparasitic and pesticide properties (neurotoxins); nornicotine serves as the precursor in the synthesis of the carcinogen compound N'-nitrosonornicotine (NNN). Catalyzes the condensation of iminoaspartate with dihydroxyacetone phosphate to form quinolinate. The chain is Quinolinate synthase, chloroplastic from Nicotiana tabacum (Common tobacco).